We begin with the raw amino-acid sequence, 275 residues long: MAEAAGVPAESLAGCRARAARTVLDQVVLPGEELLLPDQEDGDGPGGAGERPLRLNAAARSRGRVVCGPGLRRCGDRLLVTKCGRLRHKEPGSGSGGGVYWVDSQQKRYVPVKGDHVIGIVTAKSGDIFKVDVGGSEPASLSYLAFEGATKRNRPNVQVGDLIYGQFVVANKDMEPEMVCIDSCGRANGMGVIGQDGLLFKVTLGLIRKLLAPDCEILQEVGKLYPLEIVFGMNGRIWVKAKTIQQTLILANILEACEHMTADQRKQIFSRLAES.

Ala2 is modified (N-acetylalanine). A Glycyl lysine isopeptide (Lys-Gly) (interchain with G-Cter in SUMO2) cross-link involves residue Lys151.

It belongs to the RRP40 family. In terms of assembly, component of the RNA exosome core complex (Exo-9), composed of EXOSC1, EXOSC2, EXOSC3, EXOSC4, EXOSC5, EXOSC6, EXOSC7, EXOSC8 and EXOSC9; within the complex interacts with EXOSC5 and EXOSC9. The catalytically inactive RNA exosome core complex (Exo-9) associates with the catalytic subunit EXOSC10/RRP6. Exo-9 may associate with DIS3 to form the nucleolar exosome complex, or DIS3L to form the cytoplasmic exosome complex. Exo-9 is formed by a hexameric base ring consisting of the heterodimers EXOSC4-EXOSC9, EXOSC5-EXOSC8 and EXOSC6-EXOSC7, and a cap ring consisting of EXOSC1, EXOSC2 and EXOSC3. The RNA exosome complex associates with cofactors C1D/RRP47, MPHOSPH6/MPP6 and MTREX/MTR4. Interacts with MPHOSPH6/MPP6; the interaction is direct. Interacts with GTPBP1. Interacts with ZC3HAV1. Interacts with DDX17 only in the presence of ZC3HAV1 in an RNA-independent manner. Interacts with DHX36; this interaction occurs in a RNase-insensitive manner. Interacts with HBS1L isoform 2.

The protein resides in the cytoplasm. The protein localises to the nucleus. It localises to the nucleolus. Functionally, non-catalytic component of the RNA exosome complex which has 3'-&gt;5' exoribonuclease activity and participates in a multitude of cellular RNA processing and degradation events. In the nucleus, the RNA exosome complex is involved in proper maturation of stable RNA species such as rRNA, snRNA and snoRNA, in the elimination of RNA processing by-products and non-coding 'pervasive' transcripts, such as antisense RNA species and promoter-upstream transcripts (PROMPTs), and of mRNAs with processing defects, thereby limiting or excluding their export to the cytoplasm. The RNA exosome may be involved in Ig class switch recombination (CSR) and/or Ig variable region somatic hypermutation (SHM) by targeting AICDA deamination activity to transcribed dsDNA substrates. In the cytoplasm, the RNA exosome complex is involved in general mRNA turnover and specifically degrades inherently unstable mRNAs containing AU-rich elements (AREs) within their 3' untranslated regions, and in RNA surveillance pathways, preventing translation of aberrant mRNAs. It seems to be involved in degradation of histone mRNA. The catalytic inactive RNA exosome core complex of 9 subunits (Exo-9) is proposed to play a pivotal role in the binding and presentation of RNA for ribonucleolysis, and to serve as a scaffold for the association with catalytic subunits and accessory proteins or complexes. EXOSC3 as peripheral part of the Exo-9 complex stabilizes the hexameric ring of RNase PH-domain subunits through contacts with EXOSC9 and EXOSC5. The polypeptide is Exosome complex component RRP40 (EXOSC3) (Bos taurus (Bovine)).